A 269-amino-acid polypeptide reads, in one-letter code: MNLSTKFQGHPYHIVSASPWPFFLSVVLFFNCLAATLYLHGYKHSSVFFGISFLGLLATMYLWFRDMSTEANIHGAHTKAVTKGLKIGFMLFLISETFLFASIFWAFFHSSLSPTFELGAVWPPVGIADKTIDPLEVPLLNTVILLTSGASLTYAHYSLIARNRENALKGLYMTIALSFLFLGGQAYEYWNAPFTISDSVYGASFYFATGLHGIHIIVGTILLLAATYNIYTYHLTNTHHNGFECGIYYWHFCDVVWLFLYLTIYIWGS.

Transmembrane regions (helical) follow at residues 19 to 39, 44 to 64, 87 to 107, 135 to 155, 170 to 190, 205 to 225, and 247 to 267; these read PWPFFLSVVLFFNCLAATLYL, HSSVFFGISFLGLLATMYLWF, IGFMLFLISETFLFASIFWAF, LEVPLLNTVILLTSGASLTYA, GLYMTIALSFLFLGGQAYEYW, FYFATGLHGIHIIVGTILLLA, and IYYWHFCDVVWLFLYLTIYIW.

This sequence belongs to the cytochrome c oxidase subunit 3 family. As to quaternary structure, component of the cytochrome c oxidase (complex IV, CIV), a multisubunit enzyme composed of a catalytic core of 3 subunits and several supernumerary subunits. The complex exists as a monomer or a dimer and forms supercomplexes (SCs) in the inner mitochondrial membrane with ubiquinol-cytochrome c oxidoreductase (cytochrome b-c1 complex, complex III, CIII).

It is found in the mitochondrion inner membrane. The enzyme catalyses 4 Fe(II)-[cytochrome c] + O2 + 8 H(+)(in) = 4 Fe(III)-[cytochrome c] + 2 H2O + 4 H(+)(out). Functionally, component of the cytochrome c oxidase, the last enzyme in the mitochondrial electron transport chain which drives oxidative phosphorylation. The respiratory chain contains 3 multisubunit complexes succinate dehydrogenase (complex II, CII), ubiquinol-cytochrome c oxidoreductase (cytochrome b-c1 complex, complex III, CIII) and cytochrome c oxidase (complex IV, CIV), that cooperate to transfer electrons derived from NADH and succinate to molecular oxygen, creating an electrochemical gradient over the inner membrane that drives transmembrane transport and the ATP synthase. Cytochrome c oxidase is the component of the respiratory chain that catalyzes the reduction of oxygen to water. Electrons originating from reduced cytochrome c in the intermembrane space (IMS) are transferred via the dinuclear copper A center (CU(A)) of subunit 2 and heme A of subunit 1 to the active site in subunit 1, a binuclear center (BNC) formed by heme A3 and copper B (CU(B)). The BNC reduces molecular oxygen to 2 water molecules using 4 electrons from cytochrome c in the IMS and 4 protons from the mitochondrial matrix. This is Cytochrome c oxidase subunit 3 (cox3) from Schizosaccharomyces pombe (strain 972 / ATCC 24843) (Fission yeast).